A 343-amino-acid polypeptide reads, in one-letter code: UDP-3-O-acylglucosamine N-acyltransferase (343 aa).

Histidine 239 (proton acceptor) is an active-site residue.

It belongs to the transferase hexapeptide repeat family. LpxD subfamily. In terms of assembly, homotrimer.

It carries out the reaction a UDP-3-O-[(3R)-3-hydroxyacyl]-alpha-D-glucosamine + a (3R)-hydroxyacyl-[ACP] = a UDP-2-N,3-O-bis[(3R)-3-hydroxyacyl]-alpha-D-glucosamine + holo-[ACP] + H(+). The protein operates within bacterial outer membrane biogenesis; LPS lipid A biosynthesis. In terms of biological role, catalyzes the N-acylation of UDP-3-O-acylglucosamine using 3-hydroxyacyl-ACP as the acyl donor. Is involved in the biosynthesis of lipid A, a phosphorylated glycolipid that anchors the lipopolysaccharide to the outer membrane of the cell. This is UDP-3-O-acylglucosamine N-acyltransferase from Vibrio parahaemolyticus serotype O3:K6 (strain RIMD 2210633).